The chain runs to 346 residues: Probable dolichyl-diphosphooligosaccharide--protein glycosyltransferase subunit 3B (346 aa).

A signal peptide spans 1–22 (MALKSKLVSLLFLIATLSSTFA). Topologically, residues 23–189 (ASFSDSDSDS…KVGPIQRPPL (167 aa)) are lumenal. Asn-108 carries N-linked (GlcNAc...) asparagine glycosylation. A helical transmembrane segment spans residues 190-210 (LSKPQIGIIVALIVIATPFII). Residues 211–225 (KRVLKGETILHDTRL) are Cytoplasmic-facing. Residues 226–246 (WLSGAIFIYFFSVAGTMHNII) form a helical membrane-spanning segment. At 247 to 277 (RKMPMFLQDRNDPNKLVFFYQGSGMQLGAEG) the chain is on the lumenal side. Residues 278–298 (FAVGFLYTVVGLLLAFVTNVL) form a helical membrane-spanning segment. The Cytoplasmic segment spans residues 299 to 308 (VRVKNITAQR). A helical transmembrane segment spans residues 309 to 329 (LIMLLALFISFWAVKKVVYLD). Residues 330–346 (NWKTGYGIHPYWPSSWR) are Lumenal-facing.

Belongs to the OST3/OST6 family. As to quaternary structure, component of the oligosaccharyltransferase (OST) complex.

It is found in the endoplasmic reticulum membrane. Subunit of the oligosaccharyl transferase (OST) complex that catalyzes the initial transfer of a defined glycan (Glc(3)Man(9)GlcNAc(2) in eukaryotes) from the lipid carrier dolichol-pyrophosphate to an asparagine residue within an Asn-X-Ser/Thr consensus motif in nascent polypeptide chains, the first step in protein N-glycosylation. N-glycosylation occurs cotranslationally and the complex associates with the Sec61 complex at the channel-forming translocon complex that mediates protein translocation across the endoplasmic reticulum (ER). All subunits are required for a maximal enzyme activity. This Arabidopsis thaliana (Mouse-ear cress) protein is Probable dolichyl-diphosphooligosaccharide--protein glycosyltransferase subunit 3B (OST3B).